A 204-amino-acid chain; its full sequence is Acyl-homoserine-lactone synthase (204 aa).

It belongs to the autoinducer synthase family.

It carries out the reaction a fatty acyl-[ACP] + S-adenosyl-L-methionine = an N-acyl-L-homoserine lactone + S-methyl-5'-thioadenosine + holo-[ACP] + H(+). Required for the synthesis of acyl-HSL autoinducers that bind to SolR. The sequence is that of Acyl-homoserine-lactone synthase (solI) from Ralstonia nicotianae (strain ATCC BAA-1114 / GMI1000) (Ralstonia solanacearum).